Here is a 137-residue protein sequence, read N- to C-terminus: UPF0146 protein MJ0688 (137 aa).

It belongs to the UPF0146 family.

In Methanocaldococcus jannaschii (strain ATCC 43067 / DSM 2661 / JAL-1 / JCM 10045 / NBRC 100440) (Methanococcus jannaschii), this protein is UPF0146 protein MJ0688.